Here is a 598-residue protein sequence, read N- to C-terminus: UvrABC system protein C (598 aa).

Residues 14–91 (DSPGCYLHKD…IQKNMPKYNI (78 aa)) form the GIY-YIG domain. A UVR domain is found at 196–231 (DKIIEDLRSKMLAASEEMAFERAAEYRDLISGIATM).

This sequence belongs to the UvrC family. In terms of assembly, interacts with UvrB in an incision complex.

Its subcellular location is the cytoplasm. The UvrABC repair system catalyzes the recognition and processing of DNA lesions. UvrC both incises the 5' and 3' sides of the lesion. The N-terminal half is responsible for the 3' incision and the C-terminal half is responsible for the 5' incision. This Streptococcus pyogenes serotype M12 (strain MGAS2096) protein is UvrABC system protein C.